A 310-amino-acid chain; its full sequence is Beta-ketoacyl-[acyl-carrier-protein] synthase III 1 (310 aa).

Active-site residues include C112 and H235. The ACP-binding stretch occupies residues 236 to 240 (QANIR). The active site involves N265.

It belongs to the thiolase-like superfamily. FabH family. Homodimer.

The protein localises to the cytoplasm. It catalyses the reaction malonyl-[ACP] + acetyl-CoA + H(+) = 3-oxobutanoyl-[ACP] + CO2 + CoA. Its pathway is lipid metabolism; fatty acid biosynthesis. In terms of biological role, catalyzes the condensation reaction of fatty acid synthesis by the addition to an acyl acceptor of two carbons from malonyl-ACP. Catalyzes the first condensation reaction which initiates fatty acid synthesis and may therefore play a role in governing the total rate of fatty acid production. Possesses both acetoacetyl-ACP synthase and acetyl transacylase activities. Its substrate specificity determines the biosynthesis of branched-chain and/or straight-chain of fatty acids. This chain is Beta-ketoacyl-[acyl-carrier-protein] synthase III 1, found in Bacillus cereus (strain ATCC 14579 / DSM 31 / CCUG 7414 / JCM 2152 / NBRC 15305 / NCIMB 9373 / NCTC 2599 / NRRL B-3711).